We begin with the raw amino-acid sequence, 959 residues long: Isoleucine--tRNA ligase (959 aa).

The short motif at 66 to 76 is the 'HIGH' region element; it reads PYANGDIHIGH. Glutamate 592 provides a ligand contact to L-isoleucyl-5'-AMP. The 'KMSKS' region motif lies at 633–637; that stretch reads KMSKS. An ATP-binding site is contributed by lysine 636. Zn(2+)-binding residues include cysteine 922, cysteine 925, cysteine 942, and cysteine 945.

It belongs to the class-I aminoacyl-tRNA synthetase family. IleS type 1 subfamily. In terms of assembly, monomer. Zn(2+) serves as cofactor.

It localises to the cytoplasm. The catalysed reaction is tRNA(Ile) + L-isoleucine + ATP = L-isoleucyl-tRNA(Ile) + AMP + diphosphate. Its function is as follows. Catalyzes the attachment of isoleucine to tRNA(Ile). As IleRS can inadvertently accommodate and process structurally similar amino acids such as valine, to avoid such errors it has two additional distinct tRNA(Ile)-dependent editing activities. One activity is designated as 'pretransfer' editing and involves the hydrolysis of activated Val-AMP. The other activity is designated 'posttransfer' editing and involves deacylation of mischarged Val-tRNA(Ile). The chain is Isoleucine--tRNA ligase from Cupriavidus metallidurans (strain ATCC 43123 / DSM 2839 / NBRC 102507 / CH34) (Ralstonia metallidurans).